We begin with the raw amino-acid sequence, 320 residues long: Cytochrome f (320 aa).

The signal sequence occupies residues 1–35 (MQTRKTLSWIKEEITRSISVSLMIYIITGAYISNA). 4 residues coordinate heme: Tyr36, Cys56, Cys59, and His60. Residues 286-306 (VQGLLFFLASVILAQIFLVLK) traverse the membrane as a helical segment.

Belongs to the cytochrome f family. As to quaternary structure, the 4 large subunits of the cytochrome b6-f complex are cytochrome b6, subunit IV (17 kDa polypeptide, petD), cytochrome f and the Rieske protein, while the 4 small subunits are PetG, PetL, PetM and PetN. The complex functions as a dimer. It depends on heme as a cofactor.

The protein resides in the plastid. Its subcellular location is the chloroplast thylakoid membrane. In terms of biological role, component of the cytochrome b6-f complex, which mediates electron transfer between photosystem II (PSII) and photosystem I (PSI), cyclic electron flow around PSI, and state transitions. This chain is Cytochrome f, found in Populus trichocarpa (Western balsam poplar).